Consider the following 114-residue polypeptide: Early 4 ORF4 protein (114 aa).

Positions 66–75 match the Nuclear localization signal motif; the sequence is RAKRRDRRRR.

The protein belongs to the adenoviridae E4 ORF4 family. As to quaternary structure, interacts with host BAZ1A/ACF1, host PPP2R2A/PP2a-B55alpha subunit, and host PPP2R5E/PP2a-B'B56 subunit. May interact with host SRC. May be phosphorylated by host SRC kinase.

The protein resides in the host nucleus. Its subcellular location is the host cytoplasm. Functionally, plays a role in viral alternative pre-mRNA splicing. Activates dephosphorylation by protein phosphatase 2A of host SR proteins and converts their splicing properties. When expressed alone ex vivo, induces p53/TP53-independent apoptosis called cytoplasmic death. May mimic nutrient/growth signals to activate the host mTOR pathway. In Homo sapiens (Human), this protein is Early 4 ORF4 protein.